Consider the following 218-residue polypeptide: uncharacterized protein (218 aa).

This is an uncharacterized protein from Rickettsia prowazekii (strain Madrid E).